Reading from the N-terminus, the 284-residue chain is Bifunctional protein FolD (284 aa).

Residues glycine 166–serine 168, serine 191, and isoleucine 232 each bind NADP(+).

This sequence belongs to the tetrahydrofolate dehydrogenase/cyclohydrolase family. As to quaternary structure, homodimer.

The catalysed reaction is (6R)-5,10-methylene-5,6,7,8-tetrahydrofolate + NADP(+) = (6R)-5,10-methenyltetrahydrofolate + NADPH. The enzyme catalyses (6R)-5,10-methenyltetrahydrofolate + H2O = (6R)-10-formyltetrahydrofolate + H(+). It functions in the pathway one-carbon metabolism; tetrahydrofolate interconversion. In terms of biological role, catalyzes the oxidation of 5,10-methylenetetrahydrofolate to 5,10-methenyltetrahydrofolate and then the hydrolysis of 5,10-methenyltetrahydrofolate to 10-formyltetrahydrofolate. The chain is Bifunctional protein FolD from Neisseria meningitidis serogroup B (strain ATCC BAA-335 / MC58).